The sequence spans 260 residues: 2-oxo-tetronate isomerase (260 aa).

The Proton donor/acceptor role is filled by Glu143. The Mg(2+) site is built by Glu143, Asp178, Gln204, and Glu240. Glu240 serves as the catalytic Proton donor/acceptor.

It belongs to the hyi family. OtnI subfamily.

The enzyme catalyses 2-dehydro-L-erythronate = 3-dehydro-L-erythronate. It carries out the reaction 2-dehydro-D-erythronate = 3-dehydro-D-erythronate. Its function is as follows. Catalyzes the isomerization of 2-oxo-tetronate to 3-oxo-tetronate. The sequence is that of 2-oxo-tetronate isomerase from Cupriavidus necator (strain ATCC 17699 / DSM 428 / KCTC 22496 / NCIMB 10442 / H16 / Stanier 337) (Ralstonia eutropha).